We begin with the raw amino-acid sequence, 159 residues long: Nascent polypeptide-associated complex subunit beta (159 aa).

Disordered stretches follow at residues 1–39 and 121–159; these read MDME…GMDD and ESYQ…DKVE. Residues 23–32 are compositionally biased toward basic residues; it reads TPRRKVKNVH. The NAC-A/B domain occupies 36-101; sequence GMDDKKLQTS…GEDKELTELV (66 aa). Residues 136–153 show a composition bias toward acidic residues; the sequence is KDDDEDDDDIPDLVEGEN.

It belongs to the NAC-beta family. Part of the nascent polypeptide-associated complex (NAC), consisting of EGD2 and EGD1. NAC associates with ribosomes via EGD1.

The protein resides in the cytoplasm. Its subcellular location is the nucleus. In terms of biological role, component of the nascent polypeptide-associated complex (NAC), a dynamic component of the ribosomal exit tunnel, protecting the emerging polypeptides from interaction with other cytoplasmic proteins to ensure appropriate nascent protein targeting. The NAC complex also promotes mitochondrial protein import by enhancing productive ribosome interactions with the outer mitochondrial membrane and blocks the inappropriate interaction of ribosomes translating non-secretory nascent polypeptides with translocation sites in the membrane of the endoplasmic reticulum. EGD1 may act as a transcription factor that exert a negative effect on the expression of several genes that are transcribed by RNA polymerase II. The polypeptide is Nascent polypeptide-associated complex subunit beta (egd1) (Botryotinia fuckeliana (strain B05.10) (Noble rot fungus)).